The following is a 319-amino-acid chain: ATP-dependent 6-phosphofructokinase (319 aa).

Gly11 contributes to the ATP binding site. Residue Arg21 to Arg25 participates in ADP binding. ATP is bound by residues Arg72–Cys73 and Gly102–Ser105. Residue Asp103 coordinates Mg(2+). Thr125–Asp127 lines the substrate pocket. Catalysis depends on Asp127, which acts as the Proton acceptor. Arg154 contacts ADP. Substrate-binding positions include Arg162 and Met169 to Arg171. ADP-binding positions include Gly185–Glu187, Arg211, and Lys213–His215. Substrate is bound by residues Glu222, Arg243, and His249–Arg252.

This sequence belongs to the phosphofructokinase type A (PFKA) family. ATP-dependent PFK group I subfamily. Prokaryotic clade 'B1' sub-subfamily. Homotetramer. Requires Mg(2+) as cofactor.

Its subcellular location is the cytoplasm. It carries out the reaction beta-D-fructose 6-phosphate + ATP = beta-D-fructose 1,6-bisphosphate + ADP + H(+). The protein operates within carbohydrate degradation; glycolysis; D-glyceraldehyde 3-phosphate and glycerone phosphate from D-glucose: step 3/4. Its activity is regulated as follows. Allosterically activated by ADP and other diphosphonucleosides, and allosterically inhibited by phosphoenolpyruvate. In terms of biological role, catalyzes the phosphorylation of D-fructose 6-phosphate to fructose 1,6-bisphosphate by ATP, the first committing step of glycolysis. The polypeptide is ATP-dependent 6-phosphofructokinase (Anoxybacillus flavithermus (strain DSM 21510 / WK1)).